A 475-amino-acid chain; its full sequence is Ribulose bisphosphate carboxylase large chain (475 aa).

Residues 1–2 (MS) constitute a propeptide that is removed on maturation. At Pro-3 the chain carries N-acetylproline. N6,N6,N6-trimethyllysine is present on Lys-14. Residues Asn-123 and Thr-173 each contribute to the substrate site. Lys-175 (proton acceptor) is an active-site residue. Lys-177 contributes to the substrate binding site. Lys-201, Asp-203, and Glu-204 together coordinate Mg(2+). The residue at position 201 (Lys-201) is an N6-carboxylysine. His-294 serves as the catalytic Proton acceptor. Residues Arg-295, His-327, and Ser-379 each coordinate substrate.

The protein belongs to the RuBisCO large chain family. Type I subfamily. In terms of assembly, heterohexadecamer of 8 large chains and 8 small chains; disulfide-linked. The disulfide link is formed within the large subunit homodimers. Requires Mg(2+) as cofactor. Post-translationally, the disulfide bond which can form in the large chain dimeric partners within the hexadecamer appears to be associated with oxidative stress and protein turnover.

It localises to the plastid. The protein resides in the chloroplast. The enzyme catalyses 2 (2R)-3-phosphoglycerate + 2 H(+) = D-ribulose 1,5-bisphosphate + CO2 + H2O. It carries out the reaction D-ribulose 1,5-bisphosphate + O2 = 2-phosphoglycolate + (2R)-3-phosphoglycerate + 2 H(+). In terms of biological role, ruBisCO catalyzes two reactions: the carboxylation of D-ribulose 1,5-bisphosphate, the primary event in carbon dioxide fixation, as well as the oxidative fragmentation of the pentose substrate in the photorespiration process. Both reactions occur simultaneously and in competition at the same active site. The chain is Ribulose bisphosphate carboxylase large chain from Pelargonium hortorum (Common geranium).